Consider the following 97-residue polypeptide: Large ribosomal subunit protein uL23 (97 aa).

It belongs to the universal ribosomal protein uL23 family. As to quaternary structure, part of the 50S ribosomal subunit. Contacts protein L29, and trigger factor when it is bound to the ribosome.

Functionally, one of the early assembly proteins it binds 23S rRNA. One of the proteins that surrounds the polypeptide exit tunnel on the outside of the ribosome. Forms the main docking site for trigger factor binding to the ribosome. This Anaeromyxobacter sp. (strain Fw109-5) protein is Large ribosomal subunit protein uL23.